The following is an 804-amino-acid chain: Leucine--tRNA ligase (804 aa).

Residues 39–50 (PYPSGKGLHVGH) carry the 'HIGH' region motif. The 'KMSKS' region signature appears at 573–577 (KMSKS). Lys-576 contributes to the ATP binding site.

This sequence belongs to the class-I aminoacyl-tRNA synthetase family.

It is found in the cytoplasm. The enzyme catalyses tRNA(Leu) + L-leucine + ATP = L-leucyl-tRNA(Leu) + AMP + diphosphate. This Lactobacillus delbrueckii subsp. bulgaricus (strain ATCC BAA-365 / Lb-18) protein is Leucine--tRNA ligase.